The following is a 21-amino-acid chain: Peptide PGLa-BM2 (21 aa).

Position 21 is an alanine amide (Ala21).

Expressed by the skin glands.

Its subcellular location is the secreted. In terms of biological role, antimicrobial peptide. The chain is Peptide PGLa-BM2 from Xenopus boumbaensis (Mawa clawed frog).